We begin with the raw amino-acid sequence, 1923 residues long: GREB1-like protein (1923 aa).

Positions 87–96 (EDDEDDEEMS) are enriched in acidic residues. Disordered regions lie at residues 87–111 (EDDE…KPAP), 246–326 (SCHS…GPPK), and 1101–1222 (RAAV…RGCR). The segment covering 252-262 (PSSSVSSTVTP) has biased composition (low complexity). Polar residues-rich tracts occupy residues 263-278 (ENGT…TQTD), 296-307 (TPAHTGNYSLSP), and 1119-1161 (PQSN…SPAT). Low complexity predominate over residues 1195-1206 (SSTTSKPSSSSS). The helical transmembrane segment at 1843–1862 (GVFFSGLLLYLCDSFVGADL) threads the bilayer.

This sequence belongs to the GREB1 family. Widely expressed, with prominent expression in the cochlea. Expressed at high levels in fetal kidney. In adult tissues, highest levels in vagina, cervix and epididymis.

The protein resides in the membrane. Functionally, plays a major role in early metanephros and genital development. This Homo sapiens (Human) protein is GREB1-like protein (GREB1L).